A 467-amino-acid chain; its full sequence is Variant surface glycoprotein 7 (467 aa).

Residues 77–87 are compositionally biased toward polar residues; sequence TIAAGATNTKL. The segment at 77–133 is disordered; the sequence is TIAAGATNTKLSGHHPNQGRRGRRRSSSARPNNSKGNSPSKRAGGAVRGETPASGRL. The span at 93-103 shows a compositional bias: basic residues; the sequence is NQGRRGRRRSS. The segment covering 107-116 has biased composition (polar residues); that stretch reads PNNSKGNSPS. N-linked (GlcNAc...) asparagine glycans are attached at residues Asn108 and Asn252. The disordered stretch occupies residues 382–407; it reads AEKVENPRSQGNPETAENKKEGGNTA. Residue Asn416 is glycosylated (N-linked (GlcNAc...) asparagine). The GPI-anchor amidated aspartate moiety is linked to residue Asp444. The propeptide at 445 to 467 is removed in mature form; that stretch reads SSFLLSKQFALSVVSAAFAALLF.

It localises to the cell membrane. In terms of biological role, VSG forms a coat on the surface of the parasite. The trypanosome evades the immune response of the host by expressing a series of antigenically distinct VSGs from an estimated 1000 VSG genes. The sequence is that of Variant surface glycoprotein 7 from Trypanosoma brucei rhodesiense.